Consider the following 611-residue polypeptide: Muscarinic acetylcholine receptor gar-3 (611 aa).

Residues 1-67 are Extracellular-facing; that stretch reads MQSSSLGNAD…LLGEEGRMVM (67 aa). Residues Asn-28 and Asn-33 are each glycosylated (N-linked (GlcNAc...) asparagine). Residues 68-88 form a helical membrane-spanning segment; it reads IVVIGAMFALVTSLGNLMVMV. Over 89–101 the chain is Cytoplasmic; it reads SFKIDKQLQTISN. A helical transmembrane segment spans residues 102–122; that stretch reads YFLFSLAVADIAIGVISIPMF. The Extracellular segment spans residues 123–140; that stretch reads TYYTAIQKWDLGYTMCQF. A disulfide bridge links Cys-138 with Cys-218. Residues 141–161 form a helical membrane-spanning segment; it reads WLCIDYLMSNASVLNLLLISF. Topologically, residues 162 to 181 are cytoplasmic; it reads DRYFSVTRPLSYRPRRTTKK. A helical membrane pass occupies residues 182–202; sequence ALTMIACTYIISLILWPPWII. The Extracellular segment spans residues 203–227; it reads SWPYIEGKFTAEPGTCVVQFLQTNP. A helical transmembrane segment spans residues 228–248; the sequence is YVTVGTAVAAFYLPVTIMCIL. Residues 249 to 525 are Cytoplasmic-facing; it reads YTRVYWETQK…RKQESKAAKT (277 aa). 4 disordered regions span residues 299–364, 377–432, 446–477, and 500–519; these read RRSM…SSEA, SHFA…NNNS, SRPSVRLSSCEPYLDEPISTRNRSKSDCNSEI, and FSSQERKSEKEQRKNERKQE. Residues 307–317 are compositionally biased toward low complexity; it reads SSTSIIKSSGS. Residues 503 to 519 show a composition bias toward basic and acidic residues; it reads QERKSEKEQRKNERKQE. The helical transmembrane segment at 526–546 threads the bilayer; it reads LSAILCAFIATWTPYNLIVCW. Residues 547 to 557 lie on the Extracellular side of the membrane; sequence EAFFPNTVPNV. A helical membrane pass occupies residues 558 to 578; the sequence is LWTFSYFLCYINSTINPLCYA. The Cytoplasmic portion of the chain corresponds to 579-611; it reads LCNARFRHTYMRILRCKFKAERPTMNQGYVRRN.

The protein belongs to the G-protein coupled receptor 1 family. Muscarinic acetylcholine receptor subfamily.

Its subcellular location is the cell membrane. Functionally, the muscarinic acetylcholine receptor mediates various cellular responses, including inhibition of adenylate cyclase, breakdown of phosphoinositides and modulation of potassium channels through the action of G proteins. Primary transducing effect is Pi turnover. Enhances the release of the neurotransmitter acetlycholine in cholinergic motor neurons, which in turn positively feeds back to depolarize body wall muscles and allows for the maintenance of normal body posture and locomotion. The sequence is that of Muscarinic acetylcholine receptor gar-3 (gar-3) from Caenorhabditis elegans.